Consider the following 375-residue polypeptide: Succinyl-diaminopimelate desuccinylase (375 aa).

Residue H66 participates in Zn(2+) binding. The active site involves D68. Residue D99 participates in Zn(2+) binding. Catalysis depends on E133, which acts as the Proton acceptor. 3 residues coordinate Zn(2+): E134, E162, and H348.

This sequence belongs to the peptidase M20A family. DapE subfamily. Homodimer. The cofactor is Zn(2+). Co(2+) serves as cofactor.

The catalysed reaction is N-succinyl-(2S,6S)-2,6-diaminopimelate + H2O = (2S,6S)-2,6-diaminopimelate + succinate. It participates in amino-acid biosynthesis; L-lysine biosynthesis via DAP pathway; LL-2,6-diaminopimelate from (S)-tetrahydrodipicolinate (succinylase route): step 3/3. Functionally, catalyzes the hydrolysis of N-succinyl-L,L-diaminopimelic acid (SDAP), forming succinate and LL-2,6-diaminopimelate (DAP), an intermediate involved in the bacterial biosynthesis of lysine and meso-diaminopimelic acid, an essential component of bacterial cell walls. The chain is Succinyl-diaminopimelate desuccinylase from Salmonella choleraesuis (strain SC-B67).